Reading from the N-terminus, the 109-residue chain is Flagellar hook-basal body complex protein FliE 2 (109 aa).

Belongs to the FliE family.

It localises to the bacterial flagellum basal body. This chain is Flagellar hook-basal body complex protein FliE 2 (fliE2), found in Bradyrhizobium diazoefficiens (strain JCM 10833 / BCRC 13528 / IAM 13628 / NBRC 14792 / USDA 110).